A 318-amino-acid chain; its full sequence is Taste receptor type 2 member 60 (318 aa).

Topologically, residues 1-7 are extracellular; it reads MNGDHMV. Residues 8–28 traverse the membrane as a helical segment; sequence LGSSVTDKKAIILVTILLLLR. The Cytoplasmic segment spans residues 29–40; the sequence is LVAIAGNGFIIA. The chain crosses the membrane as a helical span at residues 41-61; the sequence is ALGVEWVLRRMLLPCDXLLVS. Residues 62-88 are Extracellular-facing; the sequence is LGASRFCLQSVVMGKTIYVFLHPMAFP. A helical membrane pass occupies residues 89–109; sequence YNPVLQFLAFQWDFLNAATLW. The Cytoplasmic segment spans residues 110-128; sequence FSTWLSVFYCVKIAAFTHP. Residues 129-149 traverse the membrane as a helical segment; sequence VFLWLKHKLSGWLPWILFSSV. At 150–183 the chain is on the extracellular side; that stretch reads GLSSFTTILFFIGNHRMYQNYLRNHLQPWNITGN. N-linked (GlcNAc...) asparagine glycosylation occurs at N179. A helical membrane pass occupies residues 184–204; that stretch reads SIRSYCEKFYLFPLKMITWTM. The Cytoplasmic segment spans residues 205–234; sequence PTAVFFICMILLITSLGRHMKKALLTTSGF. Residues 235 to 255 form a helical membrane-spanning segment; that stretch reads REPSMQAHIKALLALLSFAML. At 256-264 the chain is on the extracellular side; the sequence is FISYFLSLV. Residues 265–285 traverse the membrane as a helical segment; it reads FSAAGIFPPLDFKFWVWESVI. At 286–318 the chain is on the cytoplasmic side; the sequence is YLCAAVHPIILLFSNCRLRAVLKSCRSSRCGTP.

It belongs to the G-protein coupled receptor T2R family.

It localises to the membrane. Its function is as follows. Receptor that may play a role in the perception of bitterness and is gustducin-linked. May play a role in sensing the chemical composition of the gastrointestinal content. The activity of this receptor may stimulate alpha gustducin, mediate PLC-beta-2 activation and lead to the gating of TRPM5. This chain is Taste receptor type 2 member 60 (TAS2R60), found in Gorilla gorilla gorilla (Western lowland gorilla).